The chain runs to 340 residues: DnaJ homolog subfamily C member 22 (340 aa).

A TM2 domain is found at Met1–Trp50. A run of 7 helical transmembrane segments spans residues Leu5–Leu25, His30–Trp50, Phe81–Phe101, Phe105–Gly125, Leu135–Ile155, Ile186–Ser206, and Val212–Leu232. Positions Met278–Leu340 constitute a J domain.

Its subcellular location is the membrane. Functionally, may function as a co-chaperone. The polypeptide is DnaJ homolog subfamily C member 22 (dnajc22) (Xenopus tropicalis (Western clawed frog)).